Reading from the N-terminus, the 337-residue chain is MIEIDGSFGEGGGQILRTSLTLSVITGKPFRIFNIRANRPNPGLQRQHLWAVKAMKMISNAETKGDEVGSKELIFVPHEIKGNTNIDIDVGTAGSVTLIIQTVLPAIINKNVRIRIKGGTDVPKSPTIDYIRLVYLEILRKIGIEAKLNLIKRGHYPEGGGEVIIENVNGNPSAFSLLELGKLTIIKGISHVSSLPAHIAERQMNSAREILSKLGVPIEIETDVRQGEVSKGSGIALAAIGEKSIIGADSLGERGKRAEIVGEEAARILINNLNTKASVDIHMSDMLMIFASLYGGEYIGAELTSHAYTNMEIIKKFLDIKIDVSGKRPFRFKAKIF.

ATP contacts are provided by residues Gln-101 and 282–285; that span reads HMSD. The active-site Tele-AMP-histidine intermediate is His-306.

It belongs to the RNA 3'-terminal cyclase family. Type 1 subfamily.

It is found in the cytoplasm. It catalyses the reaction a 3'-end 3'-phospho-ribonucleotide-RNA + ATP = a 3'-end 2',3'-cyclophospho-ribonucleotide-RNA + AMP + diphosphate. Catalyzes the conversion of 3'-phosphate to a 2',3'-cyclic phosphodiester at the end of RNA. The mechanism of action of the enzyme occurs in 3 steps: (A) adenylation of the enzyme by ATP; (B) transfer of adenylate to an RNA-N3'P to produce RNA-N3'PP5'A; (C) and attack of the adjacent 2'-hydroxyl on the 3'-phosphorus in the diester linkage to produce the cyclic end product. The biological role of this enzyme is unknown but it is likely to function in some aspects of cellular RNA processing. The sequence is that of RNA 3'-terminal phosphate cyclase from Saccharolobus islandicus (strain L.S.2.15 / Lassen #1) (Sulfolobus islandicus).